Consider the following 331-residue polypeptide: Thiamine thiazole synthase (331 aa).

Residues S82, 103–104 (EA), G111, and V176 each bind substrate. At C210 the chain carries 2,3-didehydroalanine (Cys). Substrate-binding positions include D212, H242, M296, and 306-308 (RMG).

This sequence belongs to the THI4 family. Homooctamer. Requires Fe cation as cofactor. Post-translationally, during the catalytic reaction, a sulfide is transferred from Cys-210 to a reaction intermediate, generating a dehydroalanine residue.

The protein localises to the cytoplasm. It is found in the nucleus. The catalysed reaction is [ADP-thiazole synthase]-L-cysteine + glycine + NAD(+) = [ADP-thiazole synthase]-dehydroalanine + ADP-5-ethyl-4-methylthiazole-2-carboxylate + nicotinamide + 3 H2O + 2 H(+). Involved in biosynthesis of the thiamine precursor thiazole. Catalyzes the conversion of NAD and glycine to adenosine diphosphate 5-(2-hydroxyethyl)-4-methylthiazole-2-carboxylic acid (ADT), an adenylated thiazole intermediate. The reaction includes an iron-dependent sulfide transfer from a conserved cysteine residue of the protein to a thiazole intermediate. The enzyme can only undergo a single turnover, which suggests it is a suicide enzyme. May have additional roles in adaptation to various stress conditions and in DNA damage tolerance. The protein is Thiamine thiazole synthase of Eremothecium gossypii (strain ATCC 10895 / CBS 109.51 / FGSC 9923 / NRRL Y-1056) (Yeast).